We begin with the raw amino-acid sequence, 402 residues long: Potassium channel subfamily K member 9 (402 aa).

At 1–8 (MKRQNVRT) the chain is on the cytoplasmic side. Residues 9–29 (LSLIACTFTYLLVGAAVFDAL) form a helical membrane-spanning segment. Residues 30–88 (ESDHEMREEEKLKAEEVRLRGKYNISSDDYQQLELVILQSEPHRAGVQWKFAGSFYFAI) are Extracellular-facing. A glycan (N-linked (GlcNAc...) asparagine) is linked at N53. The pore-forming intramembrane region spans 89 to 101 (TVITTIGYGHAAP). K(+)-binding residues include T93, I94, G95, and Y96. The interval 93-98 (TIGYGH) is selectivity filter 1. Residues 102–107 (GTDAGK) lie on the Extracellular side of the membrane. A helical membrane pass occupies residues 108–128 (AFCMFYAVLGIPLTLVMFQSL). Over 129 to 158 (GERMNTFVRYLLKRIKKCCGMRNTEVSMEN) the chain is Cytoplasmic. The helical transmembrane segment at 159–179 (MVTVGFFSCMGTLCLGAAAFS) threads the bilayer. At 180-194 (QCEDWSFFHAYYYCF) the chain is on the extracellular side. An intramembrane region (pore-forming) is located at residues 195-207 (ITLTTIGFGDFVA). Positions 199, 200, 201, and 202 each coordinate K(+). The interval 199-204 (TIGFGD) is selectivity filter 2. Topologically, residues 208-218 (LQAKGALQRKP) are extracellular. Residues 219–239 (FYVAFSFMYILVGLTVIGAFL) form a helical membrane-spanning segment. At 240–402 (NLVVLRFLTM…HRLHLRRKSI (163 aa)) the chain is on the cytoplasmic side. Residues 243-248 (VLRFLT) form an X-gate region.

This sequence belongs to the two pore domain potassium channel (TC 1.A.1.8) family. Homodimer. Heterodimer with KCNK1. Heterodimer with KCNK3. Expressed in adrenal glands mainly in outer zona glomerulosa and inner zona medullaris. Expressed in retinal ganglion cells. Expressed in dentate gyrus (at protein level).

It localises to the cell membrane. Its subcellular location is the mitochondrion inner membrane. The protein resides in the cell projection. The protein localises to the dendrite. It carries out the reaction K(+)(in) = K(+)(out). It catalyses the reaction Na(+)(in) = Na(+)(out). Its activity is regulated as follows. Inhibited by NTS:NTSR1 signaling in dentate gyrus granule cells. Functionally, k(+) channel that conducts voltage-dependent outward rectifying currents upon membrane depolarization. Voltage sensing is coupled to K(+) electrochemical gradient in an 'ion flux gating' mode where outward but not inward ion flow opens the gate. Changes ion selectivity and becomes permeable to Na(+) ions in response to extracellular acidification. Protonation of the pH sensor His-98 stabilizes C-type inactivation conformation likely converting the channel from outward K(+)-conducting, to inward Na(+)-conducting to nonconductive state. Homo- and heterodimerizes to form functional channels with distinct regulatory and gating properties. Allows K(+) currents with fast-gating kinetics important for the repolarization and hyperpolarization phases of action potentials. In granule neurons, hyperpolarizes the resting membrane potential to limit intrinsic neuronal excitability, but once the action potential threshold is reached, supports high-frequency action potential firing and increased neuronal excitability. Homomeric and/or heteromeric KCNK3:KCNK9 channels operate in cerebellar granule cells, whereas heteromeric KCNK1:KCNK9 enables currents in hippocampal dentate gyrus granule neurons. Dispensable for central chemosensory respiration i.e. breathing controlled by brainstem CO2/pH, it rather conducts pH-sensitive currents and controls the firing rate of serotonergic raphe neurons involved in potentiation of the respiratory chemoreflex. In retinal ganglion cells, mediates outward rectifying currents that regulate action potentials in response to acidification of the synaptic cleft. Involved in transmission of image-forming and nonimage-forming visual information in the retina. In adrenal gland, contributes to the maintenance of a hyperpolarized resting membrane potential of aldosterone-producing cells at zona glomerulosa and limits aldosterone release as part of a regulatory mechanism that controls arterial blood pressure and electrolyte homeostasis. The chain is Potassium channel subfamily K member 9 from Mus musculus (Mouse).